The sequence spans 174 residues: RNA pyrophosphohydrolase (174 aa).

Residues 6–149 (GFRANVGIII…KRDVYRKVMK (144 aa)) form the Nudix hydrolase domain. The Nudix box motif lies at 38-59 (GGVDEGESAEQAMYRELYEEVG).

Belongs to the Nudix hydrolase family. RppH subfamily. The cofactor is a divalent metal cation.

In terms of biological role, accelerates the degradation of transcripts by removing pyrophosphate from the 5'-end of triphosphorylated RNA, leading to a more labile monophosphorylated state that can stimulate subsequent ribonuclease cleavage. The protein is RNA pyrophosphohydrolase of Shewanella loihica (strain ATCC BAA-1088 / PV-4).